A 530-amino-acid polypeptide reads, in one-letter code: Bifunctional purine biosynthesis protein PurH (530 aa).

Positions 1–147 (MPSIKRALIS…KNWKHVAIVT (147 aa)) constitute an MGS-like domain.

Belongs to the PurH family.

The catalysed reaction is (6R)-10-formyltetrahydrofolate + 5-amino-1-(5-phospho-beta-D-ribosyl)imidazole-4-carboxamide = 5-formamido-1-(5-phospho-D-ribosyl)imidazole-4-carboxamide + (6S)-5,6,7,8-tetrahydrofolate. It catalyses the reaction IMP + H2O = 5-formamido-1-(5-phospho-D-ribosyl)imidazole-4-carboxamide. Its pathway is purine metabolism; IMP biosynthesis via de novo pathway; 5-formamido-1-(5-phospho-D-ribosyl)imidazole-4-carboxamide from 5-amino-1-(5-phospho-D-ribosyl)imidazole-4-carboxamide (10-formyl THF route): step 1/1. The protein operates within purine metabolism; IMP biosynthesis via de novo pathway; IMP from 5-formamido-1-(5-phospho-D-ribosyl)imidazole-4-carboxamide: step 1/1. In Neisseria meningitidis serogroup A / serotype 4A (strain DSM 15465 / Z2491), this protein is Bifunctional purine biosynthesis protein PurH.